Reading from the N-terminus, the 185-residue chain is Elongation factor P (185 aa).

This sequence belongs to the elongation factor P family.

It is found in the cytoplasm. It functions in the pathway protein biosynthesis; polypeptide chain elongation. Functionally, involved in peptide bond synthesis. Stimulates efficient translation and peptide-bond synthesis on native or reconstituted 70S ribosomes in vitro. Probably functions indirectly by altering the affinity of the ribosome for aminoacyl-tRNA, thus increasing their reactivity as acceptors for peptidyl transferase. The protein is Elongation factor P of Synechococcus sp. (strain JA-2-3B'a(2-13)) (Cyanobacteria bacterium Yellowstone B-Prime).